We begin with the raw amino-acid sequence, 304 residues long: Histone H1.8 (304 aa).

Residues 1–24 show a composition bias toward low complexity; that stretch reads MAPGSVSSVSSSSFPSRDTSPSGS. Disordered stretches follow at residues 1-38, 110-248, and 270-304; these read MAPG…PSCR, SKAK…NSVA, and TVQE…NTQA. One can recognise an H15 domain in the interval 45-123; that stretch reads RNPTMLHMVL…GATGSFKLVP (79 aa). The segment covering 132 to 144 has biased composition (low complexity); sequence APKAGRGAAGAKE. Basic and acidic residues-rich tracts occupy residues 153-166, 189-202, and 225-237; these read LKKD…MEKG, KPKE…KQDK, and ANAH…EKSK. Residues 154–170 carry the Nuclear localization signal motif; the sequence is KKDQVGKATMEKGQKRR. Residues 270–281 are compositionally biased toward polar residues; it reads TVQETKVPTPSQ.

It belongs to the histone H1/H5 family. In terms of tissue distribution, oocyte-specific.

It is found in the cytoplasm. It localises to the nucleus. The protein localises to the chromosome. May play a key role in the control of gene expression during oogenesis and early embryogenesis, presumably through the perturbation of chromatin structure. Essential for meiotic maturation of germinal vesicle-stage oocytes. The somatic type linker histone H1c is rapidly replaced by H1oo in a donor nucleus transplanted into an oocyte. The greater mobility of H1oo as compared to H1c may contribute to this rapid replacement and increased instability of the embryonic chromatin structure. The rapid replacement of H1c with H1oo may play an important role in nuclear remodeling. This Mus musculus (Mouse) protein is Histone H1.8.